We begin with the raw amino-acid sequence, 235 residues long: Aspartate/glutamate leucyltransferase (235 aa).

This sequence belongs to the R-transferase family. Bpt subfamily.

It is found in the cytoplasm. It catalyses the reaction N-terminal L-glutamyl-[protein] + L-leucyl-tRNA(Leu) = N-terminal L-leucyl-L-glutamyl-[protein] + tRNA(Leu) + H(+). The enzyme catalyses N-terminal L-aspartyl-[protein] + L-leucyl-tRNA(Leu) = N-terminal L-leucyl-L-aspartyl-[protein] + tRNA(Leu) + H(+). In terms of biological role, functions in the N-end rule pathway of protein degradation where it conjugates Leu from its aminoacyl-tRNA to the N-termini of proteins containing an N-terminal aspartate or glutamate. The sequence is that of Aspartate/glutamate leucyltransferase from Pseudomonas putida (strain ATCC 47054 / DSM 6125 / CFBP 8728 / NCIMB 11950 / KT2440).